The chain runs to 304 residues: UDP-N-acetylenolpyruvoylglucosamine reductase (304 aa).

The region spanning 33–198 is the FAD-binding PCMH-type domain; the sequence is KVGGPVDILL…LEVTFNLEKG (166 aa). The active site involves Arg-177. The active-site Proton donor is the Ser-227. The active site involves Glu-297.

The protein belongs to the MurB family. FAD is required as a cofactor.

It is found in the cytoplasm. It carries out the reaction UDP-N-acetyl-alpha-D-muramate + NADP(+) = UDP-N-acetyl-3-O-(1-carboxyvinyl)-alpha-D-glucosamine + NADPH + H(+). It functions in the pathway cell wall biogenesis; peptidoglycan biosynthesis. Functionally, cell wall formation. The polypeptide is UDP-N-acetylenolpyruvoylglucosamine reductase (Clostridium kluyveri (strain NBRC 12016)).